Consider the following 395-residue polypeptide: Acid ceramidase (395 aa).

Positions 1–21 (MLGRSRLTFVLLAAAVTCAEA) are cleaved as a signal peptide. The cysteines at positions 31 and 340 are disulfide-linked. Cysteine 143 serves as the catalytic Nucleophile. N-linked (GlcNAc...) asparagine glycosylation is found at asparagine 173, asparagine 259, asparagine 286, and asparagine 348. A disulfide bridge connects residues cysteine 388 and cysteine 392.

Belongs to the acid ceramidase family. In terms of assembly, heterodimer; disulfide-linked. The heterodimer is composed of the disulfide-linked alpha and beta chains produced by autocatalytic cleavage of the precursor. Post-translationally, N-glycosylated. In terms of processing, proteolytically cleaved into two chains alpha and beta that remain associated via a disulfide bond. Cleavage gives rise to a conformation change that activates the enzyme. The same catalytic Cys residue mediates the autoproteolytic cleavage and subsequent hydrolysis of lipid substrates. The beta chain may undergo an additional C-terminal processing.

The protein resides in the lysosome. It localises to the secreted. It catalyses the reaction an N-acylsphing-4-enine + H2O = sphing-4-enine + a fatty acid. It carries out the reaction N-dodecanoylsphing-4-enine + H2O = dodecanoate + sphing-4-enine. The catalysed reaction is N-tetradecanoylsphing-4-enine + H2O = tetradecanoate + sphing-4-enine. The enzyme catalyses N-hexadecanoylsphing-4-enine + H2O = sphing-4-enine + hexadecanoate. It catalyses the reaction N-octadecanoylsphing-4-enine + H2O = sphing-4-enine + octadecanoate. It carries out the reaction N-dodecanoyl-(4R)-hydroxysphinganine + H2O = (4R)-hydroxysphinganine + dodecanoate. The catalysed reaction is N-(dodecanoyl)-sphinganine + H2O = dodecanoate + sphinganine. The enzyme catalyses N-(acetyl)-sphing-4-enine + H2O = sphing-4-enine + acetate. It catalyses the reaction N-(hexanoyl)sphing-4-enine + H2O = hexanoate + sphing-4-enine. It carries out the reaction N-octanoylsphing-4-enine + H2O = octanoate + sphing-4-enine. The catalysed reaction is N-(9Z-octadecenoyl)-sphing-4-enine + H2O = sphing-4-enine + (9Z)-octadecenoate. The enzyme catalyses N-dodecanoylethanolamine + H2O = dodecanoate + ethanolamine. The protein operates within lipid metabolism; sphingolipid metabolism. In terms of biological role, lysosomal ceramidase that hydrolyzes sphingolipid ceramides into sphingosine and free fatty acids at acidic pH. Ceramides, sphingosine, and its phosphorylated form sphingosine-1-phosphate are bioactive lipids that mediate cellular signaling pathways regulating several biological processes including cell proliferation, apoptosis and differentiation. Has a higher catalytic efficiency towards C12-ceramides versus other ceramides. Also catalyzes the reverse reaction allowing the synthesis of ceramides from fatty acids and sphingosine. For the reverse synthetic reaction, the natural sphingosine D-erythro isomer is more efficiently utilized as a substrate compared to D-erythro-dihydrosphingosine and D-erythro-phytosphingosine, while the fatty acids with chain lengths of 12 or 14 carbons are the most efficiently used. Also has an N-acylethanolamine hydrolase activity. By regulating the levels of ceramides, sphingosine and sphingosine-1-phosphate in the epidermis, mediates the calcium-induced differentiation of epidermal keratinocytes. Also indirectly regulates tumor necrosis factor/TNF-induced apoptosis. By regulating the intracellular balance between ceramides and sphingosine, in adrenocortical cells, probably also acts as a regulator of steroidogenesis. The chain is Acid ceramidase from Heterocephalus glaber (Naked mole rat).